A 492-amino-acid chain; its full sequence is MGLFGMMKFAQTHHLVKRRGLRAPEGYFTPIAVDLWNVMYTLVVKYQRRYPSYDREAITLHCLCSMLRVFTQKSLFPIFVTDRGVECTEPVVFGAKAILARTTAQCRTDEEASDVDASPPPSPITDSRPSFAFSNMRRRGHAFAPGDRGTRAAGPGPAAPWGAPSKPALRLAHLFCIRVLRALGYAYINSGQLEADDACANLYHTNTVAYVHTTDTDLLLMGCDIVLDISTGYIPTIHCRDLLQYFKMSYPQFLALFVRCHTDLHPNNTYASVEDVLRECHWTAPSRSQARRAARRERANSRSLESMPTLTAAPVGLETRISWTEILAQQIAGEDDYEEDPPLQPPDVAGGPRDGARSSSSEILTPPELVQVPNAQRVAEHRGYVAGRRRHVIHDAPEALDWLPDPMTIAELVEHRYVKYVISLISPKERGPWTLLKRLPIYQDLRDEDLARSIVTRHITAPDIADRFLAQLWAHAPPPAFYKDVLAKFWDE.

Disordered stretches follow at residues 110–130 (EEASDVDASPPPSPITDSRPS), 288–307 (SQARRAARRERANSRSLESM), and 334–371 (EDDYEEDPPLQPPDVAGGPRDGARSSSSEILTPPELVQ).

This sequence belongs to the herpesviridae VHS protein family. Interacts with human EIF4H, EIF4A1 and EIF4A2; interaction with eIF4AI and EIF4A2 presumably allows Vhs protein to associate with the eIF4F cap-binding complex.

It is found in the virion. Its function is as follows. Minor structural protein that acts as an endoribonuclease during lytic infection. Degrades host mRNAs in the cytoplasm by cutting them at preferred sites, including some in regions of translation initiation. Together with inhibition of host splicing by ICP27, contributes to an overall decrease in host protein synthesis. Also, after the onset of viral transcription, accelerates the turnover of viral mRNA, thereby facilitating the sequential expression of different classes of viral genes. Binds translation initiation factors eIF4H, eIF4AI, and eIF4AII, thereby may interact directly with the translation initiation complex and thus digest specifically mRNAs. Also impedes antigen presentation by major histocompatibility complex class I and class II molecules, inhibits secretion of cytokines that would otherwise recruit lymphocytes and neutrophils cells to the site of infection and blocks the activation of dendritic cells. Impedes the alpha/beta interferon-mediated response to infection. Inhibits the integrated stress response (ISR) in the infected cell, this function requires the endonuclease activity. Stress granule formation is thus inhibited, which allows protein synthesis and viral replication. The protein is Virion host shutoff protein (UL41) of Homo sapiens (Human).